A 103-amino-acid polypeptide reads, in one-letter code: ATP-dependent Clp protease adapter protein ClpS 1 (103 aa).

Belongs to the ClpS family. As to quaternary structure, binds to the N-terminal domain of the chaperone ClpA.

Functionally, involved in the modulation of the specificity of the ClpAP-mediated ATP-dependent protein degradation. The polypeptide is ATP-dependent Clp protease adapter protein ClpS 1 (Rhodopseudomonas palustris (strain ATCC BAA-98 / CGA009)).